The sequence spans 100 residues: Large ribosomal subunit protein uL23 (100 aa).

It belongs to the universal ribosomal protein uL23 family. As to quaternary structure, part of the 50S ribosomal subunit. Contacts protein L29, and trigger factor when it is bound to the ribosome.

Its function is as follows. One of the early assembly proteins it binds 23S rRNA. One of the proteins that surrounds the polypeptide exit tunnel on the outside of the ribosome. Forms the main docking site for trigger factor binding to the ribosome. The polypeptide is Large ribosomal subunit protein uL23 (Shewanella halifaxensis (strain HAW-EB4)).